We begin with the raw amino-acid sequence, 291 residues long: ATP synthase gamma chain (291 aa).

It belongs to the ATPase gamma chain family. F-type ATPases have 2 components, CF(1) - the catalytic core - and CF(0) - the membrane proton channel. CF(1) has five subunits: alpha(3), beta(3), gamma(1), delta(1), epsilon(1). CF(0) has three main subunits: a, b and c.

The protein resides in the cell inner membrane. Produces ATP from ADP in the presence of a proton gradient across the membrane. The gamma chain is believed to be important in regulating ATPase activity and the flow of protons through the CF(0) complex. The chain is ATP synthase gamma chain from Cupriavidus metallidurans (strain ATCC 43123 / DSM 2839 / NBRC 102507 / CH34) (Ralstonia metallidurans).